A 314-amino-acid polypeptide reads, in one-letter code: Ribose-phosphate pyrophosphokinase (314 aa).

Residues 37-39 and 96-97 each bind ATP; these read DGE and RQ. Residues His131 and Asp170 each contribute to the Mg(2+) site. Residue Lys194 is part of the active site. D-ribose 5-phosphate is bound by residues Arg196, Asp220, and 224 to 228; that span reads DTGGT.

Belongs to the ribose-phosphate pyrophosphokinase family. Class I subfamily. Homohexamer. It depends on Mg(2+) as a cofactor.

The protein localises to the cytoplasm. The catalysed reaction is D-ribose 5-phosphate + ATP = 5-phospho-alpha-D-ribose 1-diphosphate + AMP + H(+). The protein operates within metabolic intermediate biosynthesis; 5-phospho-alpha-D-ribose 1-diphosphate biosynthesis; 5-phospho-alpha-D-ribose 1-diphosphate from D-ribose 5-phosphate (route I): step 1/1. In terms of biological role, involved in the biosynthesis of the central metabolite phospho-alpha-D-ribosyl-1-pyrophosphate (PRPP) via the transfer of pyrophosphoryl group from ATP to 1-hydroxyl of ribose-5-phosphate (Rib-5-P). The protein is Ribose-phosphate pyrophosphokinase of Vibrio cholerae serotype O1 (strain ATCC 39315 / El Tor Inaba N16961).